The sequence spans 130 residues: Small ribosomal subunit protein uS8 (130 aa).

This sequence belongs to the universal ribosomal protein uS8 family. Part of the 30S ribosomal subunit. Contacts proteins S5 and S12.

Its function is as follows. One of the primary rRNA binding proteins, it binds directly to 16S rRNA central domain where it helps coordinate assembly of the platform of the 30S subunit. The chain is Small ribosomal subunit protein uS8 from Shewanella piezotolerans (strain WP3 / JCM 13877).